Reading from the N-terminus, the 429-residue chain is Dihydroorotase (429 aa).

Positions 59 and 61 each coordinate Zn(2+). Substrate contacts are provided by residues 61–63 (HLR) and Asn93. Zn(2+)-binding residues include Lys143, His171, His229, and Asp298. The residue at position 143 (Lys143) is an N6-carboxylysine. Asp298 is an active-site residue. Substrate-binding positions include His302 and 316 to 317 (AG).

This sequence belongs to the metallo-dependent hydrolases superfamily. DHOase family. Class I DHOase subfamily. It depends on Zn(2+) as a cofactor.

It catalyses the reaction (S)-dihydroorotate + H2O = N-carbamoyl-L-aspartate + H(+). It participates in pyrimidine metabolism; UMP biosynthesis via de novo pathway; (S)-dihydroorotate from bicarbonate: step 3/3. In terms of biological role, catalyzes the reversible cyclization of carbamoyl aspartate to dihydroorotate. The polypeptide is Dihydroorotase (Methanosphaera stadtmanae (strain ATCC 43021 / DSM 3091 / JCM 11832 / MCB-3)).